The following is a 210-amino-acid chain: MNLTVVNHPLVQHKLGLLREGDISTNKFRTITHELARLLAYEATRDFELEPITIDGWCGKIEVQQIKGKKVTVVPILRAGLGMLDGVLDLVPSAKISVVGLYRNEETLEPVPYFDKFVDSLDERIALIIDPMLATGGSMVATIDLLKRKGCKSIRAIVMVAAPEGIKVVNEAHPDVPVFTASLDSHLNEQGYIIPGLGDAGDKIFGTKHS.

Residues Arg78, Arg103, and 130–138 (DPMLATGGS) each bind 5-phospho-alpha-D-ribose 1-diphosphate. Uracil contacts are provided by residues Ile193 and 198–200 (GDA). A 5-phospho-alpha-D-ribose 1-diphosphate-binding site is contributed by Asp199.

It belongs to the UPRTase family. Mg(2+) serves as cofactor.

The catalysed reaction is UMP + diphosphate = 5-phospho-alpha-D-ribose 1-diphosphate + uracil. It functions in the pathway pyrimidine metabolism; UMP biosynthesis via salvage pathway; UMP from uracil: step 1/1. With respect to regulation, allosterically activated by GTP. Functionally, catalyzes the conversion of uracil and 5-phospho-alpha-D-ribose 1-diphosphate (PRPP) to UMP and diphosphate. The chain is Uracil phosphoribosyltransferase from Laribacter hongkongensis (strain HLHK9).